A 1448-amino-acid chain; its full sequence is MRPTEACCYLKISLIILFYMGCYAQKHPNMDIAVILVGTTEEVAIKDVHEKDDFHHLPVTPRVALVTMNESDPKSIITRICDLMSDKKVQGVVFGDDTDQEAIAQILDFISVQTLTPILGIHGGSSMIMADKEEASMFFQFGPSIEQQASVMLNIMEEYDWYIFSIVTTYFPGYQDFENKVRSTIENSFVGWELEEVIHLDMSLDDIDSKIQNQLKKLQSPVILLYCTKEEATYIFEVAHSVGLTGYGFTWIVPSLVAGDTDTVPDEFPTGLISVSYDEWDYDLPARVRDGIAIITTAASTMLSEHNSIPQSKSSCNNIQESRVYEAHMLKRYLINVTFEGRNLSFSEDGYQMHPKLVIILLNQERKWERVGKYKDRSLKMKYYVWPVFDLYPNSEEHKDEHLSIVTLEEAPFVIVEDVDPLSGTCMRNTVPCRKQIRPENRTEEGGNYIKRCCKGFCIDILKKIAKTVKFTYDLYLVTNGKHGKKINGTWNGMIGEVVTKRAYMAVGSLTINEERSEVVDFSVPFIETGISVMVSRSNGTVSPSAFLEPFSADVWVMMFVMLLIVSAVAVFVFEYFSPVGYNRCLADGREPGGPSFTIGKAIWLLWGLVFNNSVPVQNPKGTTSKIMVSVWAFFAVIFLASYTANLAAFMIQEEYVDQVSGLSDKKFQRPNDFSPAFRFGTVPNGSTERNIRNNYLEMHSYMVKFNQRSVQDALLSLKSGKLDAFIYDAAVLNYMAGRDEGCKLVTIGSGKVFATTGYGIAIQKDSGWKRQVDLAILQLFGDGEMEELEALWLTGICHNEKNEVMSSQLDIDNMAGVFYMLAAAMALSLITFIMEHLFFWQLRHCFMGVCSGKPGMVFSISRGIYSCIHGVAIEDRQSALDSPSATMNNTHSNILRLLRTAKNMANLSGVNGSPQSALDFIRRESSVYDISEHRRSFTHSDCKSFQPEENLFSDYISEVERTFGNLQLKDSNVYQDHFHHHRPHSIGSNSSIDGLYDCDNAPFTTQPRSLSKKPLDIGLPSKHPSPQIGDLYGKFSFKSDHYGAPDDLIRSDVSDISTHTVTYGNIEGNAKRRKQYKDSLKKRPASAKSRREFDEIELAYRRRQRSPDHKRYFRDKEGLRDFYLDQFRTKENNPHWEHVDLTHIYAERADDFKHDTSCSNRQHQKHVGEFVQTDRKHGSGGNAWEKNMSNIEWEDRASSNFCRNCPSKMHNYTGQNTNRPACIRCEVCKKAGNLYDISEDNSLQDLEARPIQAPNSKYPQSPNGKAQKRNRSKLHRQHSYDTFVDLQKEDVTLAPRSVSLKDKERFLDGSPYAHMFEMPNETSFTSKSHGPTHNPGGYMLSRSLYPDRVTQNPFIPTFGDDQCLLHGSKPYYFRQPAIGGLKGRADFRGAGKSLSAQHSGPSGHFQKDICIGNQPNACVSNNKNPRSFNNSTNGHVYEKLSSIESDV.

The N-terminal stretch at 1–24 is a signal peptide; sequence MRPTEACCYLKISLIILFYMGCYA. Residues 25-554 are Extracellular-facing; that stretch reads QKHPNMDIAV…SAFLEPFSAD (530 aa). Cys-81 and Cys-316 are disulfide-bonded. His-122 and Glu-279 together coordinate Zn(2+). N-linked (GlcNAc...) asparagine glycosylation is present at Asn-336. Cystine bridges form between Cys-426/Cys-453 and Cys-433/Cys-454. Positions 511 and 516 each coordinate L-glutamate. A helical membrane pass occupies residues 555-573; it reads VWVMMFVMLLIVSAVAVFV. The Cytoplasmic portion of the chain corresponds to 574–600; the sequence is FEYFSPVGYNRCLADGREPGGPSFTIG. The segment at residues 601 to 620 is an intramembrane region (discontinuously helical); it reads KAIWLLWGLVFNNSVPVQNP. A pore-forming region spans residues 601–620; sequence KAIWLLWGLVFNNSVPVQNP. At 621–627 the chain is on the cytoplasmic side; it reads KGTTSKI. A helical transmembrane segment spans residues 628-643; it reads MVSVWAFFAVIFLASY. Residues 644–819 are Extracellular-facing; that stretch reads TANLAAFMIQ…LDIDNMAGVF (176 aa). A glycan (N-linked (GlcNAc...) asparagine) is linked at Asn-685. L-glutamate-binding positions include 687 to 688 and Asp-729; that span reads ST. Cys-743 and Cys-798 are joined by a disulfide. Residues 820–839 form a helical membrane-spanning segment; sequence YMLAAAMALSLITFIMEHLF. The Cytoplasmic segment spans residues 840-1448; that stretch reads FWQLRHCFMG…EKLSSIESDV (609 aa). Residues 1254–1265 show a composition bias toward polar residues; the sequence is APNSKYPQSPNG. Positions 1254–1277 are disordered; the sequence is APNSKYPQSPNGKAQKRNRSKLHR. Basic residues predominate over residues 1267-1277; that stretch reads AQKRNRSKLHR.

It belongs to the glutamate-gated ion channel (TC 1.A.10.1) family. NR2B/GRIN2B subfamily. In terms of assembly, heterotetramer. Forms heterotetrameric channels composed of two GluN1/zeta subunits (GRIN1), and two identical GluN2/epsilon subunits (GRIN2A, GRIN2B, GRIN2C or GRIN2D) or GluN3 subunits (GRIN3A or GRIN3B) (in vitro). In vivo, the subunit composition may depend on the expression levels of the different subunits. As to expression, detected in oocytes.

The protein localises to the cell membrane. It localises to the postsynaptic cell membrane. The catalysed reaction is Ca(2+)(in) = Ca(2+)(out). It carries out the reaction Na(+)(in) = Na(+)(out). The enzyme catalyses K(+)(in) = K(+)(out). Its function is as follows. Component of N-methyl-D-aspartate (NMDA) receptors (NMDARs) that function as heterotetrameric, ligand-gated cation channels with high calcium permeability and voltage-dependent block by Mg(2+). Channel activation requires binding of the neurotransmitter L-glutamate to the GluN2 subunit, glycine binding to the GluN1 subunit, plus membrane depolarization to eliminate channel inhibition by Mg(2+). NMDARs mediate simultaneously the potasium efflux and the influx of calcium and sodium. Each GluN2 subunit confers differential attributes to channel properties, including activation, deactivation and desensitization kinetics, pH sensitivity, Ca2(+) permeability, and binding to allosteric modulators. The polypeptide is Glutamate receptor ionotropic, NMDA 2B (Xenopus laevis (African clawed frog)).